The chain runs to 157 residues: 2-C-methyl-D-erythritol 2,4-cyclodiphosphate synthase (157 aa).

A divalent metal cation-binding residues include aspartate 8, histidine 10, and histidine 42. 8-10 contributes to the 4-CDP-2-C-methyl-D-erythritol 2-phosphate binding site; the sequence is DVH. 4-CDP-2-C-methyl-D-erythritol 2-phosphate contacts are provided by residues 56–58, 132–135, phenylalanine 139, and arginine 142; these read DIG and STSE.

Belongs to the IspF family. In terms of assembly, homotrimer. Requires a divalent metal cation as cofactor.

It carries out the reaction 4-CDP-2-C-methyl-D-erythritol 2-phosphate = 2-C-methyl-D-erythritol 2,4-cyclic diphosphate + CMP. The protein operates within isoprenoid biosynthesis; isopentenyl diphosphate biosynthesis via DXP pathway; isopentenyl diphosphate from 1-deoxy-D-xylulose 5-phosphate: step 4/6. Involved in the biosynthesis of isopentenyl diphosphate (IPP) and dimethylallyl diphosphate (DMAPP), two major building blocks of isoprenoid compounds. Catalyzes the conversion of 4-diphosphocytidyl-2-C-methyl-D-erythritol 2-phosphate (CDP-ME2P) to 2-C-methyl-D-erythritol 2,4-cyclodiphosphate (ME-CPP) with a corresponding release of cytidine 5-monophosphate (CMP). This chain is 2-C-methyl-D-erythritol 2,4-cyclodiphosphate synthase, found in Dehalococcoides mccartyi (strain ATCC BAA-2266 / KCTC 15142 / 195) (Dehalococcoides ethenogenes (strain 195)).